The chain runs to 61 residues: Small ribosomal subunit protein uS14 (61 aa).

Zn(2+)-binding residues include C24, C27, C40, and C43.

Belongs to the universal ribosomal protein uS14 family. Zinc-binding uS14 subfamily. In terms of assembly, part of the 30S ribosomal subunit. Contacts proteins S3 and S10. Requires Zn(2+) as cofactor.

Functionally, binds 16S rRNA, required for the assembly of 30S particles and may also be responsible for determining the conformation of the 16S rRNA at the A site. The chain is Small ribosomal subunit protein uS14 from Acidithiobacillus ferrooxidans (strain ATCC 23270 / DSM 14882 / CIP 104768 / NCIMB 8455) (Ferrobacillus ferrooxidans (strain ATCC 23270)).